The chain runs to 254 residues: Undecaprenyl-diphosphatase (254 aa).

The next 8 helical transmembrane spans lie at 1–21 (MDII…FLPI), 41–61 (LTKA…MLIY), 70–90 (IDLW…GFIF), 97–117 (LFNV…FLIV), 134–154 (VSWT…IPGT), 175–195 (AEFS…YDLL), 209–229 (FLIG…LFLV), and 234–254 (FTFV…LMIL).

Belongs to the UppP family.

It localises to the cell inner membrane. It catalyses the reaction di-trans,octa-cis-undecaprenyl diphosphate + H2O = di-trans,octa-cis-undecaprenyl phosphate + phosphate + H(+). Its function is as follows. Catalyzes the dephosphorylation of undecaprenyl diphosphate (UPP). Confers resistance to bacitracin. The protein is Undecaprenyl-diphosphatase of Sulfurovum sp. (strain NBC37-1).